The sequence spans 388 residues: Succinate--CoA ligase [ADP-forming] subunit beta (388 aa).

The 236-residue stretch at 9–244 folds into the ATP-grasp domain; it reads KDLLVSYDIA…PSQENVRDVL (236 aa). ATP contacts are provided by residues lysine 46, 53–55, valine 102, and glutamate 107; that span reads GRG. Mg(2+) is bound by residues asparagine 199 and aspartate 213. Residues asparagine 264 and 321–323 each bind substrate; that span reads GIM.

The protein belongs to the succinate/malate CoA ligase beta subunit family. In terms of assembly, heterotetramer of two alpha and two beta subunits. Mg(2+) serves as cofactor.

The catalysed reaction is succinate + ATP + CoA = succinyl-CoA + ADP + phosphate. It catalyses the reaction GTP + succinate + CoA = succinyl-CoA + GDP + phosphate. The protein operates within carbohydrate metabolism; tricarboxylic acid cycle; succinate from succinyl-CoA (ligase route): step 1/1. In terms of biological role, succinyl-CoA synthetase functions in the citric acid cycle (TCA), coupling the hydrolysis of succinyl-CoA to the synthesis of either ATP or GTP and thus represents the only step of substrate-level phosphorylation in the TCA. The beta subunit provides nucleotide specificity of the enzyme and binds the substrate succinate, while the binding sites for coenzyme A and phosphate are found in the alpha subunit. The protein is Succinate--CoA ligase [ADP-forming] subunit beta of Chlamydia caviae (strain ATCC VR-813 / DSM 19441 / 03DC25 / GPIC) (Chlamydophila caviae).